The following is a 148-amino-acid chain: Macrodomain Ter protein (148 aa).

The protein belongs to the MatP family. In terms of assembly, homodimer.

The protein localises to the cytoplasm. Its function is as follows. Required for spatial organization of the terminus region of the chromosome (Ter macrodomain) during the cell cycle. Prevents early segregation of duplicated Ter macrodomains during cell division. Binds specifically to matS, which is a 13 bp signature motif repeated within the Ter macrodomain. The polypeptide is Macrodomain Ter protein (Haemophilus ducreyi (strain 35000HP / ATCC 700724)).